The chain runs to 536 residues: Putative cysteine ligase BshC (536 aa).

It belongs to the BshC family.

Involved in bacillithiol (BSH) biosynthesis. May catalyze the last step of the pathway, the addition of cysteine to glucosamine malate (GlcN-Mal) to generate BSH. In Anoxybacillus flavithermus (strain DSM 21510 / WK1), this protein is Putative cysteine ligase BshC.